The following is a 233-amino-acid chain: Large ribosomal subunit protein uL1 (233 aa).

The protein belongs to the universal ribosomal protein uL1 family. In terms of assembly, part of the 50S ribosomal subunit.

In terms of biological role, binds directly to 23S rRNA. The L1 stalk is quite mobile in the ribosome, and is involved in E site tRNA release. Functionally, protein L1 is also a translational repressor protein, it controls the translation of the L11 operon by binding to its mRNA. The protein is Large ribosomal subunit protein uL1 of Brucella anthropi (strain ATCC 49188 / DSM 6882 / CCUG 24695 / JCM 21032 / LMG 3331 / NBRC 15819 / NCTC 12168 / Alc 37) (Ochrobactrum anthropi).